A 384-amino-acid polypeptide reads, in one-letter code: tRNA-specific 2-thiouridylase MnmA (384 aa).

Residues 29-36 and Leu55 each bind ATP; that span reads AMSGGVDS. The active-site Nucleophile is Cys123. A disulfide bridge connects residues Cys123 and Cys220. Gly147 is a binding site for ATP. Residues 169 to 171 are interaction with tRNA; that stretch reads RDQ. The Cysteine persulfide intermediate role is filled by Cys220.

This sequence belongs to the MnmA/TRMU family.

The protein resides in the cytoplasm. The enzyme catalyses S-sulfanyl-L-cysteinyl-[protein] + uridine(34) in tRNA + AH2 + ATP = 2-thiouridine(34) in tRNA + L-cysteinyl-[protein] + A + AMP + diphosphate + H(+). Functionally, catalyzes the 2-thiolation of uridine at the wobble position (U34) of tRNA, leading to the formation of s(2)U34. The polypeptide is tRNA-specific 2-thiouridylase MnmA (Dinoroseobacter shibae (strain DSM 16493 / NCIMB 14021 / DFL 12)).